Here is a 295-residue protein sequence, read N- to C-terminus: Giardin subunit alpha-1 (295 aa).

4 Annexin repeats span residues 2 to 71 (PKVT…MDLF), 73 to 143 (DRHE…MEKW), 153 to 223 (GSPE…AHFA), and 226 to 293 (GMHR…TLWR).

It belongs to the annexin family. Giardin subunit alpha subfamily.

It is found in the cytoplasm. The protein resides in the cytoskeleton. Its function is as follows. Giardins are involved in parasite attachment to the intestinal mucosa and in the cytoskeletal disassembly and reassembly that marks the transition from infectious trophozoite to transmissible cyst. They may interact with other cytoskeletal proteins such as microtubules in the microribbons or crossbridges, to maintain the integrity of the ventral disk. The sequence is that of Giardin subunit alpha-1 from Giardia intestinalis (Giardia lamblia).